We begin with the raw amino-acid sequence, 218 residues long: Thiopurine S-methyltransferase (218 aa).

S-adenosyl-L-methionine contacts are provided by Trp10, Leu45, Glu66, and Arg123.

The protein belongs to the class I-like SAM-binding methyltransferase superfamily. TPMT family.

Its subcellular location is the cytoplasm. It catalyses the reaction S-adenosyl-L-methionine + a thiopurine = S-adenosyl-L-homocysteine + a thiopurine S-methylether.. The polypeptide is Thiopurine S-methyltransferase (Pseudomonas aeruginosa (strain LESB58)).